Here is a 315-residue protein sequence, read N- to C-terminus: Homoserine kinase (315 aa).

Residue 97-107 coordinates ATP; that stretch reads PPARGLGSSAT.

The protein belongs to the GHMP kinase family. Homoserine kinase subfamily.

It is found in the cytoplasm. The catalysed reaction is L-homoserine + ATP = O-phospho-L-homoserine + ADP + H(+). Its pathway is amino-acid biosynthesis; L-threonine biosynthesis; L-threonine from L-aspartate: step 4/5. In terms of biological role, catalyzes the ATP-dependent phosphorylation of L-homoserine to L-homoserine phosphate. This is Homoserine kinase from Prochlorococcus marinus (strain MIT 9312).